The sequence spans 503 residues: Mitochondrial antiviral-signaling protein (503 aa).

Topologically, residues 1–478 (MTFAEDKTYK…HCASSMPWAK (478 aa)) are cytoplasmic. Glycyl lysine isopeptide (Lys-Gly) (interchain with G-Cter in ubiquitin) cross-links involve residues K7 and K10. The CARD domain maps to 10–77 (KYIRDNHSKF…WVEVFIRALQ (68 aa)). The tract at residues 10-77 (KYIRDNHSKF…WVEVFIRALQ (68 aa)) is required for interaction with NLRX1. C79 is lipidated: S-palmitoyl cysteine. A disordered region spans residues 119–202 (GPSAFAPGHN…HQEQEPELGG (84 aa)). The interaction with TRAF2 stretch occupies residues 143–147 (PVQDT). Residues 145 to 166 (QDTQPPESPVENSEQLLQTNSG) show a composition bias toward polar residues. 5 positions are modified to phosphoserine: S152, S157, S172, S186, and S220. An interaction with TRAF6 1 region spans residues 153–158 (PVENSE). Residues 178–189 (PSPNQQALSPQP) show a composition bias toward polar residues. At R234 the chain carries Asymmetric dimethylarginine. Phosphoserine occurs at positions 251 and 256. Residue K302 forms a Glycyl lysine isopeptide (Lys-Gly) (interchain with G-Cter in ubiquitin) linkage. The segment at 337 to 503 (PSRVPASVAK…MLYRSRRLAQ (167 aa)) is interaction with DHX33. The tract at residues 346 to 398 (KAPANTIPPERNSKQAKETPEGPATKVTTGGNQTGPNSSIRSLHSGPEMSKPG) is disordered. A compositionally biased stretch (basic and acidic residues) spans 356–365 (RNSKQAKETP). Residues 371–387 (KVTTGGNQTGPNSSIRS) are compositionally biased toward polar residues. A Phosphoserine modification is found at S384. A pLxIS motif motif is present at residues 415 to 418 (LAIS). S418 bears the Phosphoserine; by TBK1 mark. The interaction with TRAF6 2 stretch occupies residues 431-436 (PEENEY). The disordered stretch occupies residues 446–466 (SPSADLLGSPEPLATQQPQEE). The chain crosses the membrane as a helical span at residues 479 to 496 (WLGATSALLAVFLAVMLY). Residues 497 to 503 (RSRRLAQ) are Mitochondrial intermembrane-facing.

In terms of assembly, self-associates and polymerizes (via CARD domains) to form 400 nM long three-stranded helical filaments on mitochondria, filament nucleation requires interaction with RIGI whose CARD domains act as a template for filament assembly. Interacts with RIGI, IFIH1/MDA5, TRAF2, TRAF6 and C1QBP. May interact with FADD, RIPK1, IKBKE, CHUK and IKBKB. Interacts (when phosphorylated) with IRF3; following activation and phosphorylation on the pLxIS motif by TBK1, recruits IRF3. Interacts with NLRX1. Interaction with NLRX1 requires the CARD domain. Interacts with PSMA7. Interacts with TRAFD1. Interacts (via C-terminus) with PCBP2 in a complex containing MAVS/IPS1, PCBP2 and ITCH. Interacts with CYLD. Interacts with SRC. Interacts with DHX58/LGP2 and IKBKE. Interacts with STING1. Interacts with IFIT3 (via N-terminus). Interacts with TBK1 only in the presence of IFIT3. Interacts with TTLL12; the interaction prevents MAVS binding to TBK1 and IKBKE. Interacts with MUL1. Interacts with ANKRD17. Interacts with NDFIP1. Interacts with SMURF1; the interaction is mediated by NDFIP1 and leads to MAVS ubiquitination and degradation. Interacts (via C-terminus) with GPATCH3; the interaction is markedly increased upon viral infection. Directly interacts (via CARD domain) with ATG5 and ATG12, either as ATG5 and ATG12 monomers or as ATG12-ATG5 conjugates. Interacts with DHX33 (via the helicase C-terminal domain). Interacts with DDX3X (via C-terminus); this interaction may occur rapidly, but transiently after viral infection. The interaction with DDX3X potentiates MAVS-mediated IFNB induction. Conversely inhibition of this interaction prevents MAVS-mediated IFNB induction. Transiently interacts with TRAF3 early during viral infection. Interacts with CLPB. Interacts with TRAF3IP3. Interacts with TOMM70; the interaction is enhanced by virus infection. Interacts with ZNFX1. Interacts with DHX15. Interacts with N4BP3; this interaction promotes the polyubiquitination of MAVS. Interacts with TAX1BP1; this interaction induces MAVS polyubiquitination. Interacts with NLRP3; promoting NLRP3 recruitment to mitochondria and activation of the NLRP3 inflammasome. Interacts with ECSIT; this interaction bridges RIGI to the MAVS complex at the mitochondrion. Interacts with UBL7; this interaction promotes MAVS 'Lys-27'-linked ubiquitination leading to type I interferon production. Interacts (via transmembrane domain) with SMIM30/MAVI1 (via transmembrane domain); the interaction disrupts MAVS interaction with RIGI and inhibits MAVS aggregation, resulting in the repression of type I interferon signaling and innate immune responses. Following activation, phosphorylated by TBK1 at Ser-418 in the pLxIS motif. The phosphorylated pLxIS motif constitutes an IRF3-binding motif, leading to recruitment of the transcription factor IRF3 to induce type-I interferons and other cytokines. Post-translationally, ubiquitinated. Undergoes 'Lys-48'-linked polyubiquitination catalyzed by ITCH; ITCH-dependent polyubiquitination is mediated by the interaction with PCBP2 and leads to MAVS/IPS1 proteasomal degradation. Ubiquitinated by RNF125, leading to its degradation by the proteasome. Undergoes 'Lys-48'-linked ubiquitination catalyzed by SMURF1. Undergoes 'Lys-48'-linked ubiquitination catalyzed by MARCHF5 at Lys-7, leading to proteasomal degradation. Ubiquitinated via 'Lys-63'-linked ubiquitination at Lys-10 by TRIM31, promoting MAVS polymerization and formation of three-stranded helical filaments on mitochondria. Undergoes 'Lys-63'-linked ubiquitination leading to enhanced interaction between MAVS and TRAF2. Undergoes 'Lys-27'-linked ubiquitination by UBE2N and TRIM21 leading to enhanced interaction between MAVS and TBK1. Deubiquitinated by USP10 leading to attenuation of RIGI-mediated MAVS aggregation and production of type I interferon. Undergoes 'Lys-48'-linked polyubiquitination catalyzed by RNF115 leading to its degradation. In terms of processing, proteolytically cleaved by apoptotic caspases during apoptosis, leading to its inactivation. Cleavage by CASP3 during virus-induced apoptosis inactivates it, preventing cytokine overproduction. Palmitoylated by ZHDDC4. Palmitoylation promotes MAVS stabilization and activation by inhibiting 'Lys-48'- but facilitating 'Lys-63'-linked ubiquitination.

It localises to the mitochondrion outer membrane. It is found in the mitochondrion. The protein localises to the peroxisome. In terms of biological role, adapter required for innate immune defense against viruses. Acts downstream of DHX33, RIGI and IFIH1/MDA5, which detect intracellular dsRNA produced during viral replication, to coordinate pathways leading to the activation of NF-kappa-B, IRF3 and IRF7, and to the subsequent induction of antiviral cytokines such as IFN-beta and RANTES (CCL5). Peroxisomal and mitochondrial MAVS act sequentially to create an antiviral cellular state. Upon viral infection, peroxisomal MAVS induces the rapid interferon-independent expression of defense factors that provide short-term protection, whereas mitochondrial MAVS activates an interferon-dependent signaling pathway with delayed kinetics, which amplifies and stabilizes the antiviral response. May activate the same pathways following detection of extracellular dsRNA by TLR3. May protect cells from apoptosis. Involved in NLRP3 inflammasome activation by mediating NLRP3 recruitment to mitochondria. The polypeptide is Mitochondrial antiviral-signaling protein (Mus musculus (Mouse)).